A 267-amino-acid chain; its full sequence is tRNA pseudouridine synthase A (267 aa).

The Nucleophile role is filled by aspartate 54. Tyrosine 114 is a substrate binding site.

The protein belongs to the tRNA pseudouridine synthase TruA family. As to quaternary structure, homodimer.

The enzyme catalyses uridine(38/39/40) in tRNA = pseudouridine(38/39/40) in tRNA. In terms of biological role, formation of pseudouridine at positions 38, 39 and 40 in the anticodon stem and loop of transfer RNAs. The polypeptide is tRNA pseudouridine synthase A (Tropheryma whipplei (strain Twist) (Whipple's bacillus)).